We begin with the raw amino-acid sequence, 346 residues long: Probable 3-hydroxyacyl-CoA dehydrogenase (346 aa).

The disordered stretch occupies residues 322 to 346 (RANLSPSATPCTPWKARKATSCAPP).

The protein belongs to the 3-hydroxyacyl-CoA dehydrogenase family.

It carries out the reaction a (3S)-3-hydroxyacyl-CoA + NAD(+) = a 3-oxoacyl-CoA + NADH + H(+). This chain is Probable 3-hydroxyacyl-CoA dehydrogenase, found in Deinococcus radiodurans (strain ATCC 13939 / DSM 20539 / JCM 16871 / CCUG 27074 / LMG 4051 / NBRC 15346 / NCIMB 9279 / VKM B-1422 / R1).